Consider the following 430-residue polypeptide: Protein AST2 (430 aa).

Functionally, lipid raft-associated protein involved in the targeting of PMA1 from Golgi to the plasma membrane. May induce clustering of PMA1, which facilitates partition of PMA1 into lipid rafts after leaving the ER its and transport to the cell surface. This is Protein AST2 from Saccharomyces cerevisiae (strain ATCC 204508 / S288c) (Baker's yeast).